Consider the following 417-residue polypeptide: NADH-quinone oxidoreductase subunit D (417 aa).

Belongs to the complex I 49 kDa subunit family. In terms of assembly, NDH-1 is composed of 14 different subunits. Subunits NuoB, C, D, E, F, and G constitute the peripheral sector of the complex.

It localises to the cell inner membrane. It catalyses the reaction a quinone + NADH + 5 H(+)(in) = a quinol + NAD(+) + 4 H(+)(out). In terms of biological role, NDH-1 shuttles electrons from NADH, via FMN and iron-sulfur (Fe-S) centers, to quinones in the respiratory chain. The immediate electron acceptor for the enzyme in this species is believed to be ubiquinone. Couples the redox reaction to proton translocation (for every two electrons transferred, four hydrogen ions are translocated across the cytoplasmic membrane), and thus conserves the redox energy in a proton gradient. This Burkholderia multivorans (strain ATCC 17616 / 249) protein is NADH-quinone oxidoreductase subunit D.